We begin with the raw amino-acid sequence, 157 residues long: SsrA-binding protein (157 aa).

The disordered stretch occupies residues 135-157 (KRDTIKDREGKREVERAMKTNHR).

It belongs to the SmpB family.

The protein localises to the cytoplasm. Required for rescue of stalled ribosomes mediated by trans-translation. Binds to transfer-messenger RNA (tmRNA), required for stable association of tmRNA with ribosomes. tmRNA and SmpB together mimic tRNA shape, replacing the anticodon stem-loop with SmpB. tmRNA is encoded by the ssrA gene; the 2 termini fold to resemble tRNA(Ala) and it encodes a 'tag peptide', a short internal open reading frame. During trans-translation Ala-aminoacylated tmRNA acts like a tRNA, entering the A-site of stalled ribosomes, displacing the stalled mRNA. The ribosome then switches to translate the ORF on the tmRNA; the nascent peptide is terminated with the 'tag peptide' encoded by the tmRNA and targeted for degradation. The ribosome is freed to recommence translation, which seems to be the essential function of trans-translation. This Albidiferax ferrireducens (strain ATCC BAA-621 / DSM 15236 / T118) (Rhodoferax ferrireducens) protein is SsrA-binding protein.